The chain runs to 174 residues: Endoribonuclease YbeY (174 aa).

The Zn(2+) site is built by histidine 133, histidine 137, and histidine 143.

It belongs to the endoribonuclease YbeY family. It depends on Zn(2+) as a cofactor.

The protein resides in the cytoplasm. In terms of biological role, single strand-specific metallo-endoribonuclease involved in late-stage 70S ribosome quality control and in maturation of the 3' terminus of the 16S rRNA. This chain is Endoribonuclease YbeY, found in Paracoccus denitrificans (strain Pd 1222).